The chain runs to 202 residues: MKEYNIVITGVGGQGILTAANLLGWAALKAGYKVRVGEVHGMSQRFGSVIAYVRFGDDVYGAMVPEGKADVILSFEPVEALRYINYLKKGGLVFTNARPIPPVQVSMGLATYPSLEEIKRIVEEEFNGKFLAFDAEKLAIEAGNVITTNVVLIGALTQTPGFPLSAEHVKEVIRLSVPPKAVDVNMKAFDLGVKAAKEMLNL.

Heterodimer of the IorA and IorB subunits.

It catalyses the reaction indole-3-pyruvate + 2 oxidized [2Fe-2S]-[ferredoxin] + CoA = (indol-3-yl)acetyl-CoA + 2 reduced [2Fe-2S]-[ferredoxin] + CO2 + H(+). Functionally, catalyzes the ferredoxin-dependent oxidative decarboxylation of arylpyruvates. The sequence is that of Indolepyruvate oxidoreductase subunit IorB (iorB) from Pyrococcus horikoshii (strain ATCC 700860 / DSM 12428 / JCM 9974 / NBRC 100139 / OT-3).